We begin with the raw amino-acid sequence, 344 residues long: L-rhamnose-proton symporter (344 aa).

Transmembrane regions (helical) follow at residues 4–24 (AITM…CFYA), 38–58 (WSVG…AILL), 72–92 (TLLP…NYGL), 101–121 (MGIG…TPIL), 137–157 (TLLG…AGQL), 175–195 (LVLA…MNAA), 214–234 (LPSY…FCFI), 259–279 (VLLS…YAWG), 290–310 (MSWM…GLVL), and 321–341 (VGVL…VGLG).

This sequence belongs to the L-rhamnose transporter (TC 2.A.7.6) family.

The protein resides in the cell inner membrane. It carries out the reaction L-rhamnopyranose(in) + H(+)(in) = L-rhamnopyranose(out) + H(+)(out). Functionally, uptake of L-rhamnose across the cytoplasmic membrane with the concomitant transport of protons into the cell (symport system). The protein is L-rhamnose-proton symporter of Enterobacter sp. (strain 638).